The following is a 936-amino-acid chain: Eukaryotic translation initiation factor 3 subunit C (936 aa).

Disordered regions lie at residues 1 to 38 (MSRFYRQGSSSESSSESSSDSDVQVKKPTRYVSSSEDE), 156 to 265 (HDNP…DNKW), and 283 to 317 (RKTDKDKLDRRNAVVSPLSGSGSAVPTAGEGEGEK). A compositionally biased stretch (low complexity) spans 9-22 (SSSESSSESSSDSD). Residues 172–190 (DDDDDDLSESESEESESSD) are compositionally biased toward acidic residues. Residues 199-215 (KAAFGKKPATKAVVAKK) show a composition bias toward low complexity. Acidic residues-rich tracts occupy residues 223-240 (DDSESESEESESESEELI) and 247-260 (DSDDDSDSDSDDDS). Positions 283-294 (RKTDKDKLDRRN) are enriched in basic and acidic residues. Residues 643-814 (AHMWIPIDLI…ESITFRAEQT (172 aa)) form the PCI domain. The segment at 845–936 (SYRKKGDNDH…RQNNSLVVNN (92 aa)) is disordered. A compositionally biased stretch (basic residues) spans 862–879 (HHGHQHHGHQHHGHHHHN). Low complexity-rich tracts occupy residues 880-893 (QQQQQHHQQQQQTT) and 902-911 (NQNQGNQQYQ). Positions 912-928 (NKKHHNSNQQKSHKKRQ) are enriched in basic residues.

Belongs to the eIF-3 subunit C family. In terms of assembly, component of the eukaryotic translation initiation factor 3 (eIF-3) complex.

The protein resides in the cytoplasm. Functionally, component of the eukaryotic translation initiation factor 3 (eIF-3) complex, which is involved in protein synthesis of a specialized repertoire of mRNAs and, together with other initiation factors, stimulates binding of mRNA and methionyl-tRNAi to the 40S ribosome. The eIF-3 complex specifically targets and initiates translation of a subset of mRNAs involved in cell proliferation. The protein is Eukaryotic translation initiation factor 3 subunit C (eif3C) of Dictyostelium discoideum (Social amoeba).